The chain runs to 141 residues: Nucleoside diphosphate kinase (141 aa).

Lys-11, Phe-59, Arg-87, Thr-93, Arg-104, and Asn-114 together coordinate ATP. His-117 (pros-phosphohistidine intermediate) is an active-site residue.

The protein belongs to the NDK family. As to quaternary structure, homotetramer. It depends on Mg(2+) as a cofactor.

Its subcellular location is the cytoplasm. The enzyme catalyses a 2'-deoxyribonucleoside 5'-diphosphate + ATP = a 2'-deoxyribonucleoside 5'-triphosphate + ADP. The catalysed reaction is a ribonucleoside 5'-diphosphate + ATP = a ribonucleoside 5'-triphosphate + ADP. Its function is as follows. Major role in the synthesis of nucleoside triphosphates other than ATP. The ATP gamma phosphate is transferred to the NDP beta phosphate via a ping-pong mechanism, using a phosphorylated active-site intermediate. This chain is Nucleoside diphosphate kinase, found in Acidithiobacillus ferrooxidans (strain ATCC 53993 / BNL-5-31) (Leptospirillum ferrooxidans (ATCC 53993)).